The following is a 535-amino-acid chain: UDP-N-acetylmuramoyl-L-alanyl-D-glutamate--2,6-diaminopimelate ligase (535 aa).

Residue Leu67 coordinates UDP-N-acetyl-alpha-D-muramoyl-L-alanyl-D-glutamate. ATP is bound at residue 153 to 159 (GTSGKTT). UDP-N-acetyl-alpha-D-muramoyl-L-alanyl-D-glutamate-binding positions include 195–196 (TT), Ser222, and Arg230. Lys262 carries the post-translational modification N6-carboxylysine. Meso-2,6-diaminopimelate is bound by residues Arg424, 448–451 (DNPR), Gly502, and Glu506. A Meso-diaminopimelate recognition motif motif is present at residues 448–451 (DNPR).

It belongs to the MurCDEF family. MurE subfamily. The cofactor is Mg(2+). Carboxylation is probably crucial for Mg(2+) binding and, consequently, for the gamma-phosphate positioning of ATP.

The protein resides in the cytoplasm. The enzyme catalyses UDP-N-acetyl-alpha-D-muramoyl-L-alanyl-D-glutamate + meso-2,6-diaminopimelate + ATP = UDP-N-acetyl-alpha-D-muramoyl-L-alanyl-gamma-D-glutamyl-meso-2,6-diaminopimelate + ADP + phosphate + H(+). It functions in the pathway cell wall biogenesis; peptidoglycan biosynthesis. Catalyzes the addition of meso-diaminopimelic acid to the nucleotide precursor UDP-N-acetylmuramoyl-L-alanyl-D-glutamate (UMAG) in the biosynthesis of bacterial cell-wall peptidoglycan. This chain is UDP-N-acetylmuramoyl-L-alanyl-D-glutamate--2,6-diaminopimelate ligase, found in Mycobacterium bovis (strain ATCC BAA-935 / AF2122/97).